A 723-amino-acid polypeptide reads, in one-letter code: Nicastrin (723 aa).

The N-terminal stretch at 1 to 16 (MKKWLVIVLIIAGIRC) is a signal peptide. Topologically, residues 17-678 (DGFSDQVFRT…ESVNLYLMED (662 aa)) are extracellular. N40, N181, N271, N328, N409, and N627 each carry an N-linked (GlcNAc...) asparagine glycan. Residues 679-699 (ASFEYTMILIAVISALLSIFA) form a helical membrane-spanning segment. At 700 to 723 (VGRCSETTFIVDEGEPAAEGGEPL) the chain is on the cytoplasmic side.

The protein belongs to the nicastrin family. In terms of assembly, component of the gamma-secretase complex, a complex probably composed of the presenilin homodimer (sel-12, hop-1 or spe-4), nicastrin (aph-2), aph-1 and pen-2.

The protein resides in the membrane. In terms of biological role, essential subunit of the gamma-secretase complex, an endoprotease complex that catalyzes the intramembrane cleavage of integral membrane proteins such as Notch (glp-1 or lin-12). It may represents a stabilizing cofactor required for the assembly of the gamma-secretase complex. In Caenorhabditis elegans, this protein is Nicastrin (aph-2).